The sequence spans 604 residues: ERAD-associated E3 ubiquitin-protein ligase component HRD3B (604 aa).

The N-terminal stretch at 1–25 (MRVSGQSIIAISLFTLSLYIHRVQA) is a signal peptide. Positions 48 to 69 (ESSDFDEFGESEPKSEEELDPG) are disordered. 2 N-linked (GlcNAc...) asparagine glycosylation sites follow: N78 and N105. Sel1-like repeat units lie at residues 125 to 160 (PHAQ…AGGN), 244 to 274 (VAMH…FSKA), 279 to 307 (LGYL…AANN), 311 to 344 (SGHY…ANAG), 346 to 380 (PKAF…AERG), 464 to 492 (AALL…YMYA), and 498 to 528 (AQAM…YDQA). A glycan (N-linked (GlcNAc...) asparagine) is linked at N293.

This sequence belongs to the sel-1 family.

Functionally, may be involved in the endoplasmic reticulum (ER) quality control system called ER-associated degradation (ERAD). This is ERAD-associated E3 ubiquitin-protein ligase component HRD3B from Arabidopsis thaliana (Mouse-ear cress).